Consider the following 282-residue polypeptide: Uracil-DNA glycosylase (282 aa).

A disordered region spans residues 15–40 (SAASKRKSASNTENIPEKVPAGNENQ). The active-site Proton acceptor is the aspartate 123.

This sequence belongs to the uracil-DNA glycosylase (UDG) superfamily. UNG family.

It localises to the mitochondrion. The protein localises to the nucleus. The enzyme catalyses Hydrolyzes single-stranded DNA or mismatched double-stranded DNA and polynucleotides, releasing free uracil.. With respect to regulation, inhibited by UGI, a B.subtilis bacteriophage PBS2 peptide inhibitor. In terms of biological role, excises uracil residues from the DNA which can arise as a result of misincorporation of dUMP residues by DNA polymerase or due to deamination of cytosine. This is Uracil-DNA glycosylase from Caenorhabditis elegans.